Reading from the N-terminus, the 182-residue chain is Putative colanic acid biosynthesis acetyltransferase WcaF (182 aa).

The protein belongs to the transferase hexapeptide repeat family.

It functions in the pathway slime biogenesis; slime polysaccharide biosynthesis. This is Putative colanic acid biosynthesis acetyltransferase WcaF (wcaF) from Shigella flexneri.